The following is a 175-amino-acid chain: Probable DNA replication complex GINS protein PSF2 (175 aa).

Belongs to the GINS2/PSF2 family. Component of the GINS complex which is a heterotetramer of SLD5, PSF1, PSF2 and PSF3.

Its subcellular location is the nucleus. Functionally, the GINS complex plays an essential role in the initiation of DNA replication. The sequence is that of Probable DNA replication complex GINS protein PSF2 from Encephalitozoon cuniculi (strain GB-M1) (Microsporidian parasite).